A 328-amino-acid chain; its full sequence is 3-dehydroquinate synthase (328 aa).

The protein belongs to the archaeal-type DHQ synthase family.

It carries out the reaction 2-amino-2,3,7-trideoxy-D-lyxo-hept-6-ulosonate + NAD(+) + H2O = 3-dehydroquinate + NH4(+) + NADH + H(+). Its function is as follows. Catalyzes the oxidative deamination and cyclization of 2-amino-3,7-dideoxy-D-threo-hept-6-ulosonic acid (ADH) to yield 3-dehydroquinate (DHQ), which is fed into the canonical shikimic pathway of aromatic amino acid biosynthesis. The sequence is that of 3-dehydroquinate synthase from Methanospirillum hungatei JF-1 (strain ATCC 27890 / DSM 864 / NBRC 100397 / JF-1).